Consider the following 185-residue polypeptide: Ribosome-recycling factor (185 aa).

It belongs to the RRF family.

The protein localises to the cytoplasm. Its function is as follows. Responsible for the release of ribosomes from messenger RNA at the termination of protein biosynthesis. May increase the efficiency of translation by recycling ribosomes from one round of translation to another. This chain is Ribosome-recycling factor, found in Francisella tularensis subsp. tularensis (strain FSC 198).